The following is a 719-amino-acid chain: Phosphoribosylformylglycinamidine synthase subunit PurL (719 aa).

His-47 is a catalytic residue. Residues Tyr-50 and Lys-89 each contribute to the ATP site. Glu-91 is a binding site for Mg(2+). Substrate contacts are provided by residues 92 to 95 (SHNH) and Arg-114. The active-site Proton acceptor is the His-93. Asp-115 contacts Mg(2+). Gln-238 contacts substrate. Asp-266 contacts Mg(2+). 310–312 (ESQ) provides a ligand contact to substrate. ATP-binding residues include Asp-488 and Gly-525. Asn-526 provides a ligand contact to Mg(2+). Residue Ser-528 participates in substrate binding.

Belongs to the FGAMS family. As to quaternary structure, monomer. Part of the FGAM synthase complex composed of 1 PurL, 1 PurQ and 2 PurS subunits.

It localises to the cytoplasm. It carries out the reaction N(2)-formyl-N(1)-(5-phospho-beta-D-ribosyl)glycinamide + L-glutamine + ATP + H2O = 2-formamido-N(1)-(5-O-phospho-beta-D-ribosyl)acetamidine + L-glutamate + ADP + phosphate + H(+). It functions in the pathway purine metabolism; IMP biosynthesis via de novo pathway; 5-amino-1-(5-phospho-D-ribosyl)imidazole from N(2)-formyl-N(1)-(5-phospho-D-ribosyl)glycinamide: step 1/2. Part of the phosphoribosylformylglycinamidine synthase complex involved in the purines biosynthetic pathway. Catalyzes the ATP-dependent conversion of formylglycinamide ribonucleotide (FGAR) and glutamine to yield formylglycinamidine ribonucleotide (FGAM) and glutamate. The FGAM synthase complex is composed of three subunits. PurQ produces an ammonia molecule by converting glutamine to glutamate. PurL transfers the ammonia molecule to FGAR to form FGAM in an ATP-dependent manner. PurS interacts with PurQ and PurL and is thought to assist in the transfer of the ammonia molecule from PurQ to PurL. The protein is Phosphoribosylformylglycinamidine synthase subunit PurL of Cereibacter sphaeroides (strain ATCC 17025 / ATH 2.4.3) (Rhodobacter sphaeroides).